The following is a 473-amino-acid chain: Argininosuccinate lyase (473 aa).

Residue alanine 2 is modified to N-acetylalanine. The residue at position 7 (lysine 7) is an N6-acetyllysine. Residue serine 27 coordinates 2-(N(omega)-L-arginino)succinate. Lysine 69 bears the N6-acetyllysine mark. Asparagine 114 and threonine 159 together coordinate 2-(N(omega)-L-arginino)succinate. Histidine 160 (proton acceptor) is an active-site residue. Serine 281 (proton donor) is an active-site residue. An N6-acetyllysine modification is found at lysine 288. 2-(N(omega)-L-arginino)succinate contacts are provided by asparagine 289, tyrosine 321, glutamine 326, and lysine 329.

The protein belongs to the lyase 1 family. Argininosuccinate lyase subfamily. Homotetramer. Forms tissue-specific complexes with ASS1, SLC7A1, HSP90AA1 and nitric oxide synthase NOS1, NOS2 or NOS3; the complex maintenance is independent of ASL catalytic function. Post-translationally, acetylation modifies enzyme activity in response to alterations of extracellular nutrient availability. Acetylation increased with trichostin A (TSA) or with nicotinamide (NAM). Glucose increases acetylation by about a factor of 3 with decreasing enzyme activity. Acetylation on Lys-288 is decreased on the addition of extra amino acids resulting in activation of enzyme activity.

It carries out the reaction 2-(N(omega)-L-arginino)succinate = fumarate + L-arginine. The protein operates within amino-acid biosynthesis; L-arginine biosynthesis; L-arginine from L-ornithine and carbamoyl phosphate: step 3/3. Its pathway is nitrogen metabolism; urea cycle; L-arginine and fumarate from (N(omega)-L-arginino)succinate: step 1/1. Enzyme activity is regulated by acetylation. Its function is as follows. Catalyzes the reversible cleavage of L-argininosuccinate to fumarate and L-arginine, an intermediate step reaction in the urea cycle mostly providing for hepatic nitrogen detoxification into excretable urea as well as de novo L-arginine synthesis in nonhepatic tissues. Essential regulator of intracellular and extracellular L-arginine pools. As part of citrulline-nitric oxide cycle, forms tissue-specific multiprotein complexes with argininosuccinate synthase ASS1, transport protein SLC7A1 and nitric oxide synthase NOS1, NOS2 or NOS3, allowing for cell-autonomous L-arginine synthesis while channeling extracellular L-arginine to nitric oxide synthesis pathway. The polypeptide is Argininosuccinate lyase (ASL) (Bos taurus (Bovine)).